A 268-amino-acid polypeptide reads, in one-letter code: MGSAKSVPVTPARPPPHNKHLARVADPRSPSAGILRTPIQVESSPQPGLPAGEQLEGLKHAQDSDPRSPTLGIARTPMKTSSGDPPSPLVKQLSEVFETEDSKSNLPPEPVLPPEAPLSSELDLPLGTQLSVEEQMPPWNQTEFPSKQVFSKEEARQPTETPVASQSSDKPSRDPETPRSSGSMRNRWKPNSSKVLGRSPLTILQDDNSPGTLTLRQGKRPSPLSENVSELKEGAILGTGRLLKTGGRAWEQGQDHDKENQHFPLVES.

Disordered regions lie at residues 1 to 232 (MGSA…SELK) and 247 to 268 (GRAWEQGQDHDKENQHFPLVES). Phosphoserine occurs at positions 29 and 31. Thr-37 carries the post-translational modification Phosphothreonine. Phosphoserine occurs at positions 44, 64, and 68. The segment covering 56-66 (EGLKHAQDSDP) has biased composition (basic and acidic residues). Phosphothreonine is present on Thr-76. 2 positions are modified to phosphoserine: Ser-87 and Ser-94. The tract at residues 91-120 (KQLSEVFETEDSKSNLPPEPVLPPEAPLSS) is F-box-like. Residues 107 to 116 (PPEPVLPPEA) are compositionally biased toward pro residues. Low complexity predominate over residues 117-126 (PLSSELDLPL). Polar residues-rich tracts occupy residues 128–149 (TQLSVEEQMPPWNQTEFPSKQV), 158–169 (PTETPVASQSSD), and 178–194 (PRSSGSMRNRWKPNSSK). A Phosphoserine modification is found at Ser-199. Position 202 is a phosphothreonine (Thr-202). The segment covering 205-215 (QDDNSPGTLTL) has biased composition (polar residues). Ser-209 carries the phosphoserine modification. Thr-212 is modified (phosphothreonine). The short motif at 258–260 (KEN) is the KEN box element.

Interacts with SKP1. Part of a SCF (SKP1-cullin-F-box) protein ligase complex. Post-translationally, ubiquitinated and degraded by the APC/C-Cdh1 complex.

It is found in the cytoplasm. The protein resides in the cytosol. The protein operates within protein modification; protein ubiquitination. Its function is as follows. F-box-like protein which is required for entry into mitosis. Acts by participating in E3 ligase complexes that mediate the ubiquitination and degradation of WEE1 kinase at G2/M phase. This is Cell division cycle-associated protein 3 (CDCA3) from Homo sapiens (Human).